Consider the following 258-residue polypeptide: Polysialic acid transport protein KpsM (258 aa).

Residues 1–30 (MARSGFEVQKVTVEALFLREIRTRFGKFRL) are Cytoplasmic-facing. Positions 30–251 (LGYLWAILEP…FIGLALYRTR (222 aa)) constitute an ABC transmembrane type-2 domain. A helical transmembrane segment spans residues 31 to 54 (GYLWAILEPSAHLLILLGILGYVM). At 55–61 (HRTMPDI) the chain is on the periplasmic side. Residues 62 to 81 (SFPVFLLNGLIPFFIFSSIS) form a helical membrane-spanning segment. The Cytoplasmic segment spans residues 82–108 (KRSIGAIEANQGLFNYRPVKPIDTIIA). A helical membrane pass occupies residues 109–132 (RALLETLIYVAVYILLMLIVWMTG). At 133–143 (EYFEITNFLQL) the chain is on the periplasmic side. A helical transmembrane segment spans residues 144–165 (VLTWSLLIILSCGVGLIFMVVG). Over 166 to 174 (KTFPEMQKV) the chain is Cytoplasmic. The helical transmembrane segment at 175-195 (LPILLKPLYFISCIMFPLHSI) threads the bilayer. Residues 196-226 (PKQYWSYLLWNPLVHVVELSREAVMPGYISE) lie on the Periplasmic side of the membrane. Residues 227 to 247 (GVSLNYLAMFTLVTLFIGLAL) traverse the membrane as a helical segment. Residues 248-258 (YRTREEAMLTS) are Cytoplasmic-facing.

The protein belongs to the ABC-2 integral membrane protein family.

It is found in the cell inner membrane. Its function is as follows. KpsM and KpsT constitute a system for the transport of polysialic acid across the cytoplasmic membrane. The sequence is that of Polysialic acid transport protein KpsM (kpsM) from Escherichia coli.